Here is a 158-residue protein sequence, read N- to C-terminus: Protein Smg homolog (158 aa).

It belongs to the Smg family.

The sequence is that of Protein Smg homolog from Coxiella burnetii (strain RSA 331 / Henzerling II).